Consider the following 55-residue polypeptide: Variant surface glycoprotein ETAT 1.2 (55 aa).

Asn34 is a glycosylation site (N-linked (GlcNAc...) asparagine). Residue Asn38 is the site of GPI-anchor amidated asparagine attachment. A propeptide spans 39 to 55 (NSFAIKTSTLLLAVLLF) (removed in mature form).

The protein localises to the cell membrane. In terms of biological role, VSG forms a coat on the surface of the parasite. The trypanosome evades the immune response of the host by expressing a series of antigenically distinct VSGs from an estimated 1000 VSG genes. This Trypanosoma brucei rhodesiense protein is Variant surface glycoprotein ETAT 1.2.